We begin with the raw amino-acid sequence, 260 residues long: 14-3-3-like protein (260 aa).

This sequence belongs to the 14-3-3 family.

This is 14-3-3-like protein from Pisum sativum (Garden pea).